Consider the following 362-residue polypeptide: UDP-N-acetylglucosamine--N-acetylmuramyl-(pentapeptide) pyrophosphoryl-undecaprenol N-acetylglucosamine transferase (362 aa).

Residues Thr10–Gly12, Asn124, Arg161, Ser195, and Gln291 contribute to the UDP-N-acetyl-alpha-D-glucosamine site.

This sequence belongs to the glycosyltransferase 28 family. MurG subfamily.

The protein resides in the cell membrane. The enzyme catalyses di-trans,octa-cis-undecaprenyl diphospho-N-acetyl-alpha-D-muramoyl-L-alanyl-D-glutamyl-meso-2,6-diaminopimeloyl-D-alanyl-D-alanine + UDP-N-acetyl-alpha-D-glucosamine = di-trans,octa-cis-undecaprenyl diphospho-[N-acetyl-alpha-D-glucosaminyl-(1-&gt;4)]-N-acetyl-alpha-D-muramoyl-L-alanyl-D-glutamyl-meso-2,6-diaminopimeloyl-D-alanyl-D-alanine + UDP + H(+). It functions in the pathway cell wall biogenesis; peptidoglycan biosynthesis. Functionally, cell wall formation. Catalyzes the transfer of a GlcNAc subunit on undecaprenyl-pyrophosphoryl-MurNAc-pentapeptide (lipid intermediate I) to form undecaprenyl-pyrophosphoryl-MurNAc-(pentapeptide)GlcNAc (lipid intermediate II). The chain is UDP-N-acetylglucosamine--N-acetylmuramyl-(pentapeptide) pyrophosphoryl-undecaprenol N-acetylglucosamine transferase from Streptomyces collinus.